Consider the following 206-residue polypeptide: mRNA-decapping protein D9 (206 aa).

Positions 23 to 206 (KKTHVFAICV…FIYNTLLYSK (184 aa)) constitute a Nudix hydrolase domain. Positions 104 to 125 (GKLNKSETIDDCIRREIKEETD) match the Nudix box motif. Glu-110 serves as a coordination point for Mg(2+). Catalysis depends on Glu-119, which acts as the Nucleophile. Positions 123 and 144 each coordinate Mg(2+).

It belongs to the Nudix hydrolase family. It depends on Mg(2+) as a cofactor. Requires Mn(2+) as cofactor.

Decapping enzyme required for the removal of the 5'-end m7GpppN cap tethered to viral and host mRNAs to allow their decay in cells. May therefore accelerate viral and cellular mRNA turnover to eliminate competing host mRNAs and allow stage-specific synthesis of viral proteins. Acceleration of the turnover of cellular transcripts may even promote the shutoff of host protein synthesis. Does not cleave unmethylated RNAs or RNAs shorter than 24 nucleotides. The chain is mRNA-decapping protein D9 from Oryctolagus cuniculus (Rabbit).